Consider the following 1182-residue polypeptide: CRISPR-associated endoribonuclease Cas13a (1182 aa).

The stretch at 132–279 forms a coiled coil; that stretch reads FNNLIEKVQN…ENNSDNKLKQ (148 aa). Residues 366–508 form an HEPN-like fold 1 region; it reads YIKNTGQLET…NNEEIKGYFI (143 aa). Positions 896–955 form a coiled coil; that stretch reads KVEKENIEDYNKKEEIEQKKKSNIEKLQDLKVELHKKWEQNKITEKEIEKYNNTTRKINE. Residues 965–1120 form an HEPN-like fold 2 region; the sequence is LQNVYLLHEM…QNHILKSTKT (156 aa).

This sequence belongs to the CRISPR-associated endoribonuclease Cas13a family. It depends on a divalent metal cation as a cofactor.

Its activity is regulated as follows. Target RNA acts as an activator for non-specific ssRNA degradation. Functionally, CRISPR (clustered regularly interspaced short palindromic repeat), is an adaptive immune system that provides protection against mobile genetic elements (viruses, transposable elements and conjugative plasmids). CRISPR clusters contain sequences complementary to antecedent mobile elements and target invading nucleic acids. Unlike many single-component effectors, this CRISPR-Cas system targets RNA. CRISPR clusters are transcribed from pre-CRISPR RNA (crRNA) and processed into crRNA by this protein. Cleaves linear target ssRNA in a pre-crRNA-dependent fashion, preferentially before U residues. Binding a viable target RNA target activates this protein for non-specific RNA degradation in vitro (called collateral RNA degradation), which is fairly sensitive as it requires picomolar levels of viable target RNA. The sequence is that of CRISPR-associated endoribonuclease Cas13a from Leptotrichia wadei (strain F0279).